Consider the following 151-residue polypeptide: Large ribosomal subunit protein bL9 (151 aa).

Belongs to the bacterial ribosomal protein bL9 family.

Binds to the 23S rRNA. In Dehalococcoides mccartyi (strain ATCC BAA-2100 / JCM 16839 / KCTC 5957 / BAV1), this protein is Large ribosomal subunit protein bL9.